We begin with the raw amino-acid sequence, 550 residues long: Zinc finger protein 382 (550 aa).

The tract at residues 1–105 is mediates interaction with TRIM28; that stretch reads MPLQGSVSFK…RHSRPLIFIN (105 aa). Represses transcription stretches follow at residues 5–46 and 70–211; these read GSVS…FVSV and IFPS…PEQP. The 72-residue stretch at 7–78 folds into the KRAB domain; that stretch reads VSFKDVTVDF…RIFPSYSYLE (72 aa). The segment at 212–234 adopts a C2H2-type 1; degenerate zinc-finger fold; that stretch reads FDHNECEKSFLMKGMLFTHTRAH. C2H2-type zinc fingers lie at residues 296-318, 324-346, 352-374, 380-402, 408-430, 436-458, 464-486, 492-514, and 520-542; these read FHCPYCGNNFRRKSYLIEHQRIH, YVCNQCGKAFRQKTALTLHEKTH, FICIDCGKSFRQKATLTRHHKTH, YECPQCGSAFRKKSYLIDHQRTH, YQCNECGKAFIQKTTLTVHQRTH, YICNECGKSFCQKTTLTLHQRIH, YICNECGKSFRQKAILTVHHRIH, NGCPQCGKAFSRKSNLIRHQKTH, and YECKQCGKFFSCKSNLIVHQKTH. The required for transcriptional repression activity; probably mediates sequence-specific DNA-binding stretch occupies residues 296–550; it reads FHCPYCGNNF…THKVETTGIQ (255 aa).

The protein belongs to the krueppel C2H2-type zinc-finger protein family. Interacts with TRIM28; enhances the transcriptional repressor activity. In terms of tissue distribution, specifically expressed in heart with a weaker expression also detected in skeletal muscle.

The protein localises to the nucleus. Functions as a sequence-specific transcriptional repressor. This chain is Zinc finger protein 382 (ZNF382), found in Homo sapiens (Human).